The primary structure comprises 297 residues: Probable endonuclease 4 (297 aa).

Zn(2+) is bound by residues histidine 68, histidine 109, glutamate 144, aspartate 178, histidine 181, histidine 213, aspartate 226, histidine 228, and glutamate 258.

Belongs to the AP endonuclease 2 family. The cofactor is Zn(2+).

The catalysed reaction is Endonucleolytic cleavage to 5'-phosphooligonucleotide end-products.. Its function is as follows. Endonuclease IV plays a role in DNA repair. It cleaves phosphodiester bonds at apurinic or apyrimidinic (AP) sites, generating a 3'-hydroxyl group and a 5'-terminal sugar phosphate. The protein is Probable endonuclease 4 of Lysinibacillus sphaericus (strain C3-41).